The sequence spans 153 residues: Xanthine-guanine phosphoribosyltransferase (153 aa).

5-phospho-alpha-D-ribose 1-diphosphate is bound by residues 37-38 (RG), Arg-69, and 88-96 (DDLVDTGGT). Arg-69 is a GMP binding site. Mg(2+) is bound at residue Asp-89. Positions 92 and 135 each coordinate guanine. Residues Asp-92 and Ile-135 each contribute to the xanthine site. GMP contacts are provided by residues 92 to 96 (DTGGT) and 134 to 135 (WI).

This sequence belongs to the purine/pyrimidine phosphoribosyltransferase family. XGPT subfamily. As to quaternary structure, homotetramer. Requires Mg(2+) as cofactor.

The protein localises to the cell membrane. It carries out the reaction GMP + diphosphate = guanine + 5-phospho-alpha-D-ribose 1-diphosphate. The catalysed reaction is XMP + diphosphate = xanthine + 5-phospho-alpha-D-ribose 1-diphosphate. The enzyme catalyses IMP + diphosphate = hypoxanthine + 5-phospho-alpha-D-ribose 1-diphosphate. Its pathway is purine metabolism; GMP biosynthesis via salvage pathway; GMP from guanine: step 1/1. It functions in the pathway purine metabolism; XMP biosynthesis via salvage pathway; XMP from xanthine: step 1/1. Its function is as follows. Purine salvage pathway enzyme that catalyzes the transfer of the ribosyl-5-phosphate group from 5-phospho-alpha-D-ribose 1-diphosphate (PRPP) to the N9 position of the 6-oxopurines guanine and xanthine to form the corresponding ribonucleotides GMP (guanosine 5'-monophosphate) and XMP (xanthosine 5'-monophosphate), with the release of PPi. To a lesser extent, also acts on hypoxanthine. This Buchnera aphidicola subsp. Baizongia pistaciae (strain Bp) protein is Xanthine-guanine phosphoribosyltransferase.